A 167-amino-acid chain; its full sequence is ATP synthase subunit b (167 aa).

Residues 9–29 traverse the membrane as a helical segment; the sequence is ALPLGNMLFIIIAFLLLMLIL.

This sequence belongs to the ATPase B chain family. In terms of assembly, F-type ATPases have 2 components, F(1) - the catalytic core - and F(0) - the membrane proton channel. F(1) has five subunits: alpha(3), beta(3), gamma(1), delta(1), epsilon(1). F(0) has three main subunits: a(1), b(2) and c(10-14). The alpha and beta chains form an alternating ring which encloses part of the gamma chain. F(1) is attached to F(0) by a central stalk formed by the gamma and epsilon chains, while a peripheral stalk is formed by the delta and b chains.

Its subcellular location is the cell membrane. Its function is as follows. F(1)F(0) ATP synthase produces ATP from ADP in the presence of a proton or sodium gradient. F-type ATPases consist of two structural domains, F(1) containing the extramembraneous catalytic core and F(0) containing the membrane proton channel, linked together by a central stalk and a peripheral stalk. During catalysis, ATP synthesis in the catalytic domain of F(1) is coupled via a rotary mechanism of the central stalk subunits to proton translocation. In terms of biological role, component of the F(0) channel, it forms part of the peripheral stalk, linking F(1) to F(0). The chain is ATP synthase subunit b from Leuconostoc mesenteroides subsp. mesenteroides (strain ATCC 8293 / DSM 20343 / BCRC 11652 / CCM 1803 / JCM 6124 / NCDO 523 / NBRC 100496 / NCIMB 8023 / NCTC 12954 / NRRL B-1118 / 37Y).